The sequence spans 85 residues: Sec-independent protein translocase protein TatA (85 aa).

Residues 1–21 traverse the membrane as a helical segment; that stretch reads MGGISIWQLLIIALIVVLLFG. The interval 43-85 is disordered; the sequence is MSSEEDKKALEDAEAAKPVQTAQTAQPTQQATEKKPESNKEQA. Positions 46–57 are enriched in basic and acidic residues; it reads EEDKKALEDAEA. Residues 58-73 show a composition bias toward low complexity; the sequence is AKPVQTAQTAQPTQQA. Residues 74 to 85 show a composition bias toward basic and acidic residues; it reads TEKKPESNKEQA.

Belongs to the TatA/E family. The Tat system comprises two distinct complexes: a TatABC complex, containing multiple copies of TatA, TatB and TatC subunits, and a separate TatA complex, containing only TatA subunits. Substrates initially bind to the TatABC complex, which probably triggers association of the separate TatA complex to form the active translocon.

It is found in the cell inner membrane. In terms of biological role, part of the twin-arginine translocation (Tat) system that transports large folded proteins containing a characteristic twin-arginine motif in their signal peptide across membranes. TatA could form the protein-conducting channel of the Tat system. This chain is Sec-independent protein translocase protein TatA, found in Shewanella sp. (strain MR-4).